Here is a 101-residue protein sequence, read N- to C-terminus: Small ribosomal subunit protein uS14A (101 aa).

Residues 31-73 are disordered; sequence IKSPSTTPEARVAAQSELNRQPRDASPVRVRNRDSVDGRPRGH. Residues 61–70 are compositionally biased toward basic and acidic residues; it reads RNRDSVDGRP.

Belongs to the universal ribosomal protein uS14 family. Part of the 30S ribosomal subunit. Contacts proteins S3 and S10.

Functionally, binds 16S rRNA, required for the assembly of 30S particles and may also be responsible for determining the conformation of the 16S rRNA at the A site. This chain is Small ribosomal subunit protein uS14A, found in Mycolicibacterium vanbaalenii (strain DSM 7251 / JCM 13017 / BCRC 16820 / KCTC 9966 / NRRL B-24157 / PYR-1) (Mycobacterium vanbaalenii).